A 737-amino-acid chain; its full sequence is Dipeptidyl peptidase 3 (737 aa).

Position 2 is an N-acetylalanine (alanine 2). Histidine 450 contacts Zn(2+). Glutamate 451 is a catalytic residue. Residues histidine 455 and glutamate 508 each coordinate Zn(2+).

Belongs to the peptidase M49 family. Requires Zn(2+) as cofactor. As to expression, detected in placenta (at protein level). Detected in erythrocytes (at protein level).

Its subcellular location is the cytoplasm. The protein localises to the cytosol. The enzyme catalyses Release of an N-terminal dipeptide from a peptide comprising four or more residues, with broad specificity. Also acts on dipeptidyl 2-naphthylamides.. Its activity is regulated as follows. Activated by Co(2+). Inhibited by EDTA and o-phenanthroline (in vitro). Its function is as follows. Cleaves and degrades bioactive peptides, including angiotensin, Leu-enkephalin and Met-enkephalin. Also cleaves Arg-Arg-beta-naphthylamide (in vitro). The protein is Dipeptidyl peptidase 3 (DPP3) of Homo sapiens (Human).